The primary structure comprises 660 residues: DNA mismatch repair protein MutL (660 aa).

It belongs to the DNA mismatch repair MutL/HexB family.

Functionally, this protein is involved in the repair of mismatches in DNA. It is required for dam-dependent methyl-directed DNA mismatch repair. May act as a 'molecular matchmaker', a protein that promotes the formation of a stable complex between two or more DNA-binding proteins in an ATP-dependent manner without itself being part of a final effector complex. The polypeptide is DNA mismatch repair protein MutL (Streptococcus pyogenes serotype M3 (strain ATCC BAA-595 / MGAS315)).